The sequence spans 177 residues: Inorganic pyrophosphatase (177 aa).

Residues K30, R44, and Y56 each contribute to the substrate site. Positions 66, 71, and 103 each coordinate Mg(2+). Residue Y142 coordinates substrate.

It belongs to the PPase family. In terms of assembly, homohexamer. It depends on Mg(2+) as a cofactor.

The protein localises to the cytoplasm. The catalysed reaction is diphosphate + H2O = 2 phosphate + H(+). Functionally, catalyzes the hydrolysis of inorganic pyrophosphate (PPi) forming two phosphate ions. The protein is Inorganic pyrophosphatase of Mesorhizobium japonicum (strain LMG 29417 / CECT 9101 / MAFF 303099) (Mesorhizobium loti (strain MAFF 303099)).